Reading from the N-terminus, the 120-residue chain is UPF0342 protein Csac_0863 (120 aa).

This sequence belongs to the UPF0342 family.

The polypeptide is UPF0342 protein Csac_0863 (Caldicellulosiruptor saccharolyticus (strain ATCC 43494 / DSM 8903 / Tp8T 6331)).